Consider the following 109-residue polypeptide: DNA-binding protein MJ0691 (109 aa).

The protein belongs to the PDCD5 family.

This chain is DNA-binding protein MJ0691, found in Methanocaldococcus jannaschii (strain ATCC 43067 / DSM 2661 / JAL-1 / JCM 10045 / NBRC 100440) (Methanococcus jannaschii).